A 425-amino-acid chain; its full sequence is Glutamyl-tRNA reductase (425 aa).

Residues 49–52 (TCNR), serine 109, 114–116 (EGQ), and glutamine 120 each bind substrate. The Nucleophile role is filled by cysteine 50. 189–194 (GAGETG) provides a ligand contact to NADP(+).

It belongs to the glutamyl-tRNA reductase family. In terms of assembly, homodimer.

The catalysed reaction is (S)-4-amino-5-oxopentanoate + tRNA(Glu) + NADP(+) = L-glutamyl-tRNA(Glu) + NADPH + H(+). Its pathway is porphyrin-containing compound metabolism; protoporphyrin-IX biosynthesis; 5-aminolevulinate from L-glutamyl-tRNA(Glu): step 1/2. It functions in the pathway porphyrin-containing compound metabolism; chlorophyll biosynthesis. Its function is as follows. Catalyzes the NADPH-dependent reduction of glutamyl-tRNA(Glu) to glutamate 1-semialdehyde (GSA). The chain is Glutamyl-tRNA reductase from Pelodictyon phaeoclathratiforme (strain DSM 5477 / BU-1).